The primary structure comprises 355 residues: Spore germination protein XB (355 aa).

10 helical membrane-spanning segments follow: residues 2–24 (VNFFQIALVLIGSTGIINHVIII), 34–56 (DSWISIIILSLVYIIWIPCVFIV), 69–91 (LMRNYGGFITYPLLSIIVLYLII), 106–128 (FYLPETPRILLGVLLSIICFYNI), 135–157 (IALTTGILLPVVFLLGFFVMIAN), 180–197 (GMIYPAAGFVELIFILFL), 210–232 (LIIVGIILAGITLGPTIAAIVEF), 265–287 (VYQWLVGVFIRISLVIFLIPDVL), 299–321 (ISILLICMVIICILPISDASFYW), and 326–348 (VFLPISAIGLFLFSMLLLVFVWV).

Belongs to the amino acid-polyamine-organocation (APC) superfamily. Spore germination protein (SGP) (TC 2.A.3.9) family.

Its subcellular location is the cell membrane. Its function is as follows. May allow B.anthracis to germinate within phagocytic cells and therefore involved in virulence. In Bacillus anthracis, this protein is Spore germination protein XB (gerXB).